We begin with the raw amino-acid sequence, 986 residues long: Bifunctional glutamine synthetase adenylyltransferase/adenylyl-removing enzyme (986 aa).

An adenylyl removase region spans residues 1 to 475 (MSFPLAHVDA…VFDHLIGEEK (475 aa)). The interval 481–986 (TETLWHDFLE…LFEHNDKYEE (506 aa)) is adenylyl transferase.

It belongs to the GlnE family. Mg(2+) serves as cofactor.

The enzyme catalyses [glutamine synthetase]-O(4)-(5'-adenylyl)-L-tyrosine + phosphate = [glutamine synthetase]-L-tyrosine + ADP. It catalyses the reaction [glutamine synthetase]-L-tyrosine + ATP = [glutamine synthetase]-O(4)-(5'-adenylyl)-L-tyrosine + diphosphate. Its function is as follows. Involved in the regulation of glutamine synthetase GlnA, a key enzyme in the process to assimilate ammonia. When cellular nitrogen levels are high, the C-terminal adenylyl transferase (AT) inactivates GlnA by covalent transfer of an adenylyl group from ATP to specific tyrosine residue of GlnA, thus reducing its activity. Conversely, when nitrogen levels are low, the N-terminal adenylyl removase (AR) activates GlnA by removing the adenylyl group by phosphorolysis, increasing its activity. The regulatory region of GlnE binds the signal transduction protein PII (GlnB) which indicates the nitrogen status of the cell. The protein is Bifunctional glutamine synthetase adenylyltransferase/adenylyl-removing enzyme of Pasteurella multocida (strain Pm70).